Consider the following 301-residue polypeptide: Protein RESTRICTED TEV MOVEMENT 3 (301 aa).

One can recognise an MATH domain in the interval 6–134 (DKKITWTIKN…NGELKIVVEI (129 aa)). The stretch at 235–289 (KLDWLEKKLYEVSEKKENEEASETGLQEMEEELKDMKQKCLEMEALVEKEKAKVS) forms a coiled coil.

In terms of assembly, self-interacts. Interacts with RTM1.

Required for the restriction of long-distance movement of the pathogenic tobacco etch virus (TEV) without causing a hypersensitive response or inducing systemic acquired resistance. The protein is Protein RESTRICTED TEV MOVEMENT 3 (RTM3) of Arabidopsis thaliana (Mouse-ear cress).